Reading from the N-terminus, the 446-residue chain is ATP synthase subunit b-delta (446 aa).

The ATP synthase subunit b stretch occupies residues 1–168 (MSTFIGQLFG…PATADVDYPL (168 aa)). A helical membrane pass occupies residues 4–24 (FIGQLFGFAVIVYLVWRFIVP). The interval 169 to 446 (LAKMRSASRR…LAAAEARLPD (278 aa)) is ATP synthase subunit delta.

It in the N-terminal section; belongs to the ATPase B chain family. This sequence in the C-terminal section; belongs to the ATPase delta chain family. In terms of assembly, F-type ATPases have 2 components, F(1) - the catalytic core - and F(0) - the membrane proton channel. F(1) has five subunits: alpha(3), beta(3), gamma(1), delta(1), epsilon(1). F(0) has three main subunits: a(1), b(2) and c(10-14). The alpha and beta chains form an alternating ring which encloses part of the gamma chain. F(1) is attached to F(0) by a central stalk formed by the gamma and epsilon chains, while a peripheral stalk is formed by the delta and b chains.

The protein resides in the cell membrane. Its function is as follows. F(1)F(0) ATP synthase produces ATP from ADP in the presence of a proton or sodium gradient. F-type ATPases consist of two structural domains, F(1) containing the extramembraneous catalytic core and F(0) containing the membrane proton channel, linked together by a central stalk and a peripheral stalk. During catalysis, ATP synthesis in the catalytic domain of F(1) is coupled via a rotary mechanism of the central stalk subunits to proton translocation. This fusion protein includes a component of the F(0) channel (subunit b) and of the F(1) subunit (subunit delta). Two copies of subunit b and one of delta together form the peripheral 'stator' stalk which links F(1) to F(0). The protein is ATP synthase subunit b-delta (atpFH) of Mycobacterium bovis (strain ATCC BAA-935 / AF2122/97).